A 72-amino-acid chain; its full sequence is U10-myrmicitoxin-Tb1a (72 aa).

The first 26 residues, 1-26 (MRVSYLSLTLTIVVVIAIIYAPETEA), serve as a signal peptide directing secretion. Positions 27–36 (KAWADADAEA) are excised as a propeptide.

Belongs to the formicidae venom precursor-01 superfamily. As to expression, expressed by the venom gland.

It localises to the secreted. Its function is as follows. In vivo, this neurotoxin paralyzes about 40% of blowflies (L.caesar) one hour after intrathoracic injection, when tested at high doses (28 nmol/g). The chain is U10-myrmicitoxin-Tb1a from Tetramorium bicarinatum (Tramp ant).